The sequence spans 615 residues: Proteasome-associated ATPase (615 aa).

Over residues 1–13 the composition is skewed to basic and acidic residues; it reads MSESQRHEAREDG. The interval 1–32 is disordered; the sequence is MSESQRHEAREDGFTTPHESGLSSEDAAELEE. Residues 22–100 are a coiled coil; it reads LSSEDAAELE…LREEVDRLGQ (79 aa). An ATP-binding site is contributed by 302–307; it reads GCGKTL. A docks into pockets in the proteasome alpha-ring region spans residues 614–615; it reads YL.

The protein belongs to the AAA ATPase family. As to quaternary structure, homohexamer. Assembles into a hexameric ring structure that caps the 20S proteasome core. Strongly interacts with the prokaryotic ubiquitin-like protein Pup through a hydrophobic interface; the interacting region of ARC lies in its N-terminal coiled-coil domain. There is one Pup binding site per ARC hexamer ring. Upon ATP-binding, the C-terminus of ARC interacts with the alpha-rings of the proteasome core, possibly by binding to the intersubunit pockets.

It participates in protein degradation; proteasomal Pup-dependent pathway. ATPase which is responsible for recognizing, binding, unfolding and translocation of pupylated proteins into the bacterial 20S proteasome core particle. May be essential for opening the gate of the 20S proteasome via an interaction with its C-terminus, thereby allowing substrate entry and access to the site of proteolysis. Thus, the C-termini of the proteasomal ATPase may function like a 'key in a lock' to induce gate opening and therefore regulate proteolysis. The sequence is that of Proteasome-associated ATPase from Mycobacterium sp. (strain JLS).